The chain runs to 263 residues: MLYFIGLGLFSEDDISYKGFKALKSVDCIYAEFYTAKLMGGNIDNLIEKLDVPFITLKREDVEDANVIIKEAMTKDIAFVTAGDSLMATTHTELYVEAINKGIKTQIIHGSSIFSAAPGISGLQAYKFGKTTTVPFPDENFFPHSPYDAIKLNSQMGLHTLVLLDIQAHKDRYMTVNQALDYLSKVESERKEHVFDDDRIVIGIAQAGSKHPIVKGGRVSDVKNFDFGKPLHCIIVPANLHFIEAEALITLADVDKELLKDFL.

Residues Leu-9, Asp-84, Met-87, 112-113 (SI), Leu-164, Ala-207, and His-232 contribute to the S-adenosyl-L-methionine site.

The protein belongs to the diphthine synthase family. As to quaternary structure, homodimer.

It catalyses the reaction 2-[(3S)-amino-3-carboxypropyl]-L-histidyl-[translation elongation factor 2] + 3 S-adenosyl-L-methionine = diphthine-[translation elongation factor 2] + 3 S-adenosyl-L-homocysteine + 3 H(+). Its pathway is protein modification; peptidyl-diphthamide biosynthesis. Functionally, S-adenosyl-L-methionine-dependent methyltransferase that catalyzes the trimethylation of the amino group of the modified target histidine residue in translation elongation factor 2 (EF-2), to form an intermediate called diphthine. The three successive methylation reactions represent the second step of diphthamide biosynthesis. The chain is Diphthine synthase from Methanosphaera stadtmanae (strain ATCC 43021 / DSM 3091 / JCM 11832 / MCB-3).